Reading from the N-terminus, the 505-residue chain is Sodium/sialic acid symporter NanT (505 aa).

Transmembrane regions (helical) follow at residues 9-29 (LNYI…VYFA), 45-65 (IPGW…ITFM), 80-100 (IGQY…IPFF), 128-148 (FMLF…LALM), and 155-175 (PLMI…LGGI). Residue alanine 56 coordinates Na(+). Threonine 58 is an N-acetyl-alpha-neuraminate binding site. Leucine 59 contacts Na(+). 4 residues coordinate N-acetyl-alpha-neuraminate: serine 60, threonine 63, glutamine 82, and arginine 135. A Na(+)-binding site is contributed by aspartate 182. A run of 4 helical transmembrane segments spans residues 183 to 203 (VIQG…ICFN), 227 to 247 (FSWS…FFAS), 280 to 300 (LVAC…AYYT), and 318 to 338 (FYVI…AIFA). Na(+) contacts are provided by alanine 339, serine 342, serine 343, serine 345, and serine 346. A run of 4 helical transmembrane segments spans residues 378 to 398 (TLTV…IMSN), 406 to 426 (FNSL…LGIF), 435 to 455 (ALLG…ATDL), and 457 to 477 (FFFY…LTAP).

Belongs to the sodium:solute symporter (SSF) (TC 2.A.21) family.

It is found in the cell inner membrane. It catalyses the reaction N-acetyl-alpha-neuraminate(out) + 2 Na(+)(out) = N-acetyl-alpha-neuraminate(in) + 2 Na(+)(in). Functionally, symporter that uses the Na(+) gradient as the driving force for the uptake of the sialic acid N-acetylneuraminic acid (Neu5Ac). Might play a role in persistence after colonization. This is Sodium/sialic acid symporter NanT from Aliivibrio fischeri (strain ATCC 700601 / ES114) (Vibrio fischeri).